Here is a 65-residue protein sequence, read N- to C-terminus: MARITVQDAVEKIGNRFNLVLIAARRARQIQINGKDPLVPEKNDKSTVIALREIEQGLIGNQIID.

This sequence belongs to the RNA polymerase subunit omega family. In terms of assembly, the RNAP catalytic core consists of 2 alpha, 1 beta, 1 beta' and 1 omega subunit. When a sigma factor is associated with the core the holoenzyme is formed, which can initiate transcription.

It catalyses the reaction RNA(n) + a ribonucleoside 5'-triphosphate = RNA(n+1) + diphosphate. Promotes RNA polymerase assembly. Latches the N- and C-terminal regions of the beta' subunit thereby facilitating its interaction with the beta and alpha subunits. This chain is DNA-directed RNA polymerase subunit omega, found in Baumannia cicadellinicola subsp. Homalodisca coagulata.